A 295-amino-acid chain; its full sequence is G1/S-specific cyclin-D1 (295 aa).

Residues 28-152 enclose the Cyclin N-terminal domain; that stretch reads LRAMLKAEET…VLVNKLKWNL (125 aa). Residues 264–295 are disordered; the sequence is QQNLDPKAAEEEEEEEEVDLACTPTDVRDVNI. A Glycyl lysine isopeptide (Lys-Gly) (interchain with G-Cter in ubiquitin) cross-link involves residue lysine 270. The segment covering 273–282 has biased composition (acidic residues); sequence EEEEEEEEVD. A Phosphothreonine modification is found at threonine 286.

The protein belongs to the cyclin family. Cyclin D subfamily. Interacts with either CDK4 or CDK6 protein kinase to form a serine/threonine kinase holoenzyme complex. The cyclin subunit imparts substrate specificity to the complex. Component of the ternary complex CCND1/CDK4/CDKN1B required for nuclear translocation and modulation of CDK4-mediated kinase activity. Interacts directly with CDKN1B. Can form similar complexes with either CDKN1A or CDKN2A. Interacts with UHRF2; the interaction ubiquitinates CCND1 and appears to occur independently of phosphorylation. Interacts with USP2. Interacts (via cyclin N-terminal domain) with INSM1 (via N-terminal region); the interaction competes with the binding of CCND1 to CDK4 during cell cycle progression and inhibits CDK4 activity. Interacts with CDK4; the interaction is prevented with the binding of CCND1 to INSM1 during cell cycle progression. Phosphorylation at Thr-286 by MAP kinases is required for ubiquitination and degradation by the DCX(AMBRA1) complex. It also plays an essential role for recognition by the FBXO31 component of SCF (SKP1-cullin-F-box) protein ligase complex following DNA damage. In terms of processing, ubiquitinated at Lys-270 by the DCX(AMBRA1) complex during the transition from G1 to S cell phase, leading to its degradation: ubiquitination is dependent on Thr-286 phosphorylation. The DCX(AMBRA1) complex represents the major regulator of CCND1 stability during the G1/S transition. Also ubiquitinated by the SCF(FBXO4) and Cul7-RING(FBXW8) ubiquitin-protein ligase complexes. Following DNA damage it is ubiquitinated by the SCF(FBXO31) protein ligase complex. SCF(FBXO31) ubiquitination is dependent on Thr-286 phosphorylation. Ubiquitinated also by UHRF2 apparently in a phosphorylation-independent manner. Ubiquitination leads to its degradation and G1 arrest. Deubiquitinated by USP2; leading to its stabilization.

It localises to the nucleus. The protein resides in the cytoplasm. The protein localises to the nucleus membrane. Functionally, regulatory component of the cyclin D1-CDK4 (DC) complex that phosphorylates and inhibits members of the retinoblastoma (RB) protein family including RB1 and regulates the cell-cycle during G(1)/S transition. Phosphorylation of RB1 allows dissociation of the transcription factor E2F from the RB/E2F complex and the subsequent transcription of E2F target genes which are responsible for the progression through the G(1) phase. Hypophosphorylates RB1 in early G(1) phase. Cyclin D-CDK4 complexes are major integrators of various mitogenenic and antimitogenic signals. Also a substrate for SMAD3, phosphorylating SMAD3 in a cell-cycle-dependent manner and repressing its transcriptional activity. Component of the ternary complex, cyclin D1/CDK4/CDKN1B, required for nuclear translocation and activity of the cyclin D-CDK4 complex. Exhibits transcriptional corepressor activity with INSM1 on the NEUROD1 and INS promoters in a cell cycle-independent manner. The sequence is that of G1/S-specific cyclin-D1 (CCND1) from Bos taurus (Bovine).